A 457-amino-acid polypeptide reads, in one-letter code: Argininosuccinate lyase (457 aa).

The protein belongs to the lyase 1 family. Argininosuccinate lyase subfamily.

Its subcellular location is the cytoplasm. It carries out the reaction 2-(N(omega)-L-arginino)succinate = fumarate + L-arginine. It functions in the pathway amino-acid biosynthesis; L-arginine biosynthesis; L-arginine from L-ornithine and carbamoyl phosphate: step 3/3. The chain is Argininosuccinate lyase from Escherichia fergusonii (strain ATCC 35469 / DSM 13698 / CCUG 18766 / IAM 14443 / JCM 21226 / LMG 7866 / NBRC 102419 / NCTC 12128 / CDC 0568-73).